Reading from the N-terminus, the 172-residue chain is Ribosome maturation factor RimM (172 aa).

The PRC barrel domain occupies 95–168 (DEGEFYYHQI…RVDVAIMEGL (74 aa)).

This sequence belongs to the RimM family. In terms of assembly, binds ribosomal protein uS19.

The protein resides in the cytoplasm. In terms of biological role, an accessory protein needed during the final step in the assembly of 30S ribosomal subunit, possibly for assembly of the head region. Essential for efficient processing of 16S rRNA. May be needed both before and after RbfA during the maturation of 16S rRNA. It has affinity for free ribosomal 30S subunits but not for 70S ribosomes. In Streptococcus uberis (strain ATCC BAA-854 / 0140J), this protein is Ribosome maturation factor RimM.